A 396-amino-acid polypeptide reads, in one-letter code: Elongation factor Tu (396 aa).

One can recognise a tr-type G domain in the interval 10–206 (KPHVNIGTIG…AVDEYIPTPQ (197 aa)). The G1 stretch occupies residues 19 to 26 (GHVDHGKT). 19–26 (GHVDHGKT) serves as a coordination point for GTP. Thr26 is a binding site for Mg(2+). The segment at 60 to 64 (GITIS) is G2. The tract at residues 81–84 (DCPG) is G3. Residues 81 to 85 (DCPGH) and 136 to 139 (NKVD) each bind GTP. Residues 136 to 139 (NKVD) form a G4 region. Residues 174–176 (SAL) are G5.

This sequence belongs to the TRAFAC class translation factor GTPase superfamily. Classic translation factor GTPase family. EF-Tu/EF-1A subfamily. As to quaternary structure, monomer.

The protein localises to the cytoplasm. It catalyses the reaction GTP + H2O = GDP + phosphate + H(+). GTP hydrolase that promotes the GTP-dependent binding of aminoacyl-tRNA to the A-site of ribosomes during protein biosynthesis. In Stigmatella aurantiaca, this protein is Elongation factor Tu.